We begin with the raw amino-acid sequence, 280 residues long: Putative pyruvate, phosphate dikinase regulatory protein (280 aa).

147-154 (GASRSSKT) contributes to the ADP binding site.

It belongs to the pyruvate, phosphate/water dikinase regulatory protein family. PDRP subfamily.

It catalyses the reaction N(tele)-phospho-L-histidyl/L-threonyl-[pyruvate, phosphate dikinase] + ADP = N(tele)-phospho-L-histidyl/O-phospho-L-threonyl-[pyruvate, phosphate dikinase] + AMP + H(+). It carries out the reaction N(tele)-phospho-L-histidyl/O-phospho-L-threonyl-[pyruvate, phosphate dikinase] + phosphate + H(+) = N(tele)-phospho-L-histidyl/L-threonyl-[pyruvate, phosphate dikinase] + diphosphate. Its function is as follows. Bifunctional serine/threonine kinase and phosphorylase involved in the regulation of the pyruvate, phosphate dikinase (PPDK) by catalyzing its phosphorylation/dephosphorylation. The polypeptide is Putative pyruvate, phosphate dikinase regulatory protein (Pelobacter propionicus (strain DSM 2379 / NBRC 103807 / OttBd1)).